A 234-amino-acid chain; its full sequence is 7-cyano-7-deazaguanine synthase (234 aa).

Residue 8–18 (FSGGQDSTTCA) participates in ATP binding. Residues cysteine 194, cysteine 202, cysteine 205, and cysteine 208 each contribute to the Zn(2+) site.

This sequence belongs to the QueC family. It depends on Zn(2+) as a cofactor.

The enzyme catalyses 7-carboxy-7-deazaguanine + NH4(+) + ATP = 7-cyano-7-deazaguanine + ADP + phosphate + H2O + H(+). It functions in the pathway purine metabolism; 7-cyano-7-deazaguanine biosynthesis. In terms of biological role, catalyzes the ATP-dependent conversion of 7-carboxy-7-deazaguanine (CDG) to 7-cyano-7-deazaguanine (preQ(0)). The sequence is that of 7-cyano-7-deazaguanine synthase from Gloeobacter violaceus (strain ATCC 29082 / PCC 7421).